The sequence spans 314 residues: Putative S-adenosyl-L-methionine-dependent methyltransferase MMAR_5323 (314 aa).

Residues Asp132 and 161–162 (DL) contribute to the S-adenosyl-L-methionine site.

It belongs to the UPF0677 family.

In terms of biological role, exhibits S-adenosyl-L-methionine-dependent methyltransferase activity. The chain is Putative S-adenosyl-L-methionine-dependent methyltransferase MMAR_5323 from Mycobacterium marinum (strain ATCC BAA-535 / M).